The following is a 302-amino-acid chain: Pyridoxal kinase (302 aa).

Residues serine 10, threonine 45, and tyrosine 122 each contribute to the substrate site. ATP is bound by residues 181-182 (TS) and 215-227 (VGPKFNDYYTGTG). Aspartate 228 provides a ligand contact to substrate.

This sequence belongs to the pyridoxine kinase family. In terms of assembly, homodimer. The cofactor is a divalent metal cation.

It localises to the cytoplasm. The enzyme catalyses pyridoxal + ATP = pyridoxal 5'-phosphate + ADP + H(+). Its pathway is cofactor metabolism; pyridoxal 5'-phosphate salvage; pyridoxal 5'-phosphate from pyridoxal: step 1/1. In terms of biological role, required for synthesis of pyridoxal-5-phosphate from vitamin B6. This is Pyridoxal kinase (pykA) from Dictyostelium discoideum (Social amoeba).